The chain runs to 1014 residues: Beta-galactosidase (1014 aa).

Glutamate 460 serves as the catalytic Proton donor. The Nucleophile role is filled by glutamate 527.

Belongs to the glycosyl hydrolase 2 family.

The enzyme catalyses Hydrolysis of terminal non-reducing beta-D-galactose residues in beta-D-galactosides.. In Halalkalibacterium halodurans (strain ATCC BAA-125 / DSM 18197 / FERM 7344 / JCM 9153 / C-125) (Bacillus halodurans), this protein is Beta-galactosidase (lacZ).